A 134-amino-acid chain; its full sequence is Beta-synuclein (134 aa).

2 tandem repeats follow at residues 20–30 and 31–41. The 4 X 11 AA tandem repeats of [EGS]-K-T-K-[EQ]-[GQ]-V-X(4) stretch occupies residues 20 to 67; the sequence is EKTKQGVTEAAEKTKEGVLYVGSKTKEGVVQGVASVAEKTKEQASHLG. The stretch at 42–56 is one 3; approximate repeat; the sequence is SKTKEGVVQGVASVA. Repeat unit 4 spans residues 57-67; the sequence is EKTKEQASHLG. The interval 97–134 is disordered; it reads EVAQEAAEEPLIEPLMEPEGESYEEQPQEEYQEYEPEA. Positions 98-134 are enriched in acidic residues; it reads VAQEAAEEPLIEPLMEPEGESYEEQPQEEYQEYEPEA. The residue at position 118 (Ser118) is a Phosphoserine; by BARK1, CK2 and GRK5.

This sequence belongs to the synuclein family. Phosphorylated. Phosphorylation by G-protein coupled receptor kinases (GRK) is more efficient than phosphorylation by CK1, CK2 and CaM-kinase II. Specifically present in synapses around neurons but not in glial cells.

Its subcellular location is the cytoplasm. Functionally, may be involved in neuronal plasticity. This chain is Beta-synuclein (SNCB), found in Bos taurus (Bovine).